We begin with the raw amino-acid sequence, 272 residues long: Proteasome subunit beta (272 aa).

Positions 1–47 are cleaved as a propeptide — removed in mature form; by autocatalysis; sequence MSTGGDRLPEAFLRPGSSSFVEFLREVAPQSHPEHARPAGAGDVVHA. Threonine 48 functions as the Nucleophile in the catalytic mechanism.

It belongs to the peptidase T1B family. In terms of assembly, the 20S proteasome core is composed of 14 alpha and 14 beta subunits that assemble into four stacked heptameric rings, resulting in a barrel-shaped structure. The two inner rings, each composed of seven catalytic beta subunits, are sandwiched by two outer rings, each composed of seven alpha subunits. The catalytic chamber with the active sites is on the inside of the barrel. Has a gated structure, the ends of the cylinder being occluded by the N-termini of the alpha-subunits. Is capped by the proteasome-associated ATPase, ARC.

It localises to the cytoplasm. It catalyses the reaction Cleavage of peptide bonds with very broad specificity.. It functions in the pathway protein degradation; proteasomal Pup-dependent pathway. The formation of the proteasomal ATPase ARC-20S proteasome complex, likely via the docking of the C-termini of ARC into the intersubunit pockets in the alpha-rings, may trigger opening of the gate for substrate entry. Interconversion between the open-gate and close-gate conformations leads to a dynamic regulation of the 20S proteasome proteolysis activity. In terms of biological role, component of the proteasome core, a large protease complex with broad specificity involved in protein degradation. The protein is Proteasome subunit beta of Beutenbergia cavernae (strain ATCC BAA-8 / DSM 12333 / CCUG 43141 / JCM 11478 / NBRC 16432 / NCIMB 13614 / HKI 0122).